Here is a 273-residue protein sequence, read N- to C-terminus: Polyamine aminopropyltransferase (273 aa).

In terms of domain architecture, PABS spans 5-238 (ENWFSERYSD…GFWSFTIASE (234 aa)). S-methyl-5'-thioadenosine is bound at residue Gln-34. Residues His-65 and Asp-90 each contribute to the spermidine site. Residues Glu-109 and 140 to 141 (DG) contribute to the S-methyl-5'-thioadenosine site. The Proton acceptor role is filled by Asp-158. 158-161 (DSTD) provides a ligand contact to spermidine. Pro-165 is an S-methyl-5'-thioadenosine binding site.

This sequence belongs to the spermidine/spermine synthase family. Homodimer or homotetramer.

The protein localises to the cytoplasm. It catalyses the reaction S-adenosyl 3-(methylsulfanyl)propylamine + putrescine = S-methyl-5'-thioadenosine + spermidine + H(+). The protein operates within amine and polyamine biosynthesis; spermidine biosynthesis; spermidine from putrescine: step 1/1. Catalyzes the irreversible transfer of a propylamine group from the amino donor S-adenosylmethioninamine (decarboxy-AdoMet) to putrescine (1,4-diaminobutane) to yield spermidine. The polypeptide is Polyamine aminopropyltransferase (Thermoplasma volcanium (strain ATCC 51530 / DSM 4299 / JCM 9571 / NBRC 15438 / GSS1)).